We begin with the raw amino-acid sequence, 124 residues long: Small ribosomal subunit protein uS12 (124 aa).

Residue Asp90 is modified to 3-methylthioaspartic acid.

Belongs to the universal ribosomal protein uS12 family. As to quaternary structure, part of the 30S ribosomal subunit. Contacts proteins S8 and S17. May interact with IF1 in the 30S initiation complex.

Functionally, with S4 and S5 plays an important role in translational accuracy. In terms of biological role, interacts with and stabilizes bases of the 16S rRNA that are involved in tRNA selection in the A site and with the mRNA backbone. Located at the interface of the 30S and 50S subunits, it traverses the body of the 30S subunit contacting proteins on the other side and probably holding the rRNA structure together. The combined cluster of proteins S8, S12 and S17 appears to hold together the shoulder and platform of the 30S subunit. The sequence is that of Small ribosomal subunit protein uS12 from Wolbachia sp. subsp. Drosophila simulans (strain wRi).